A 449-amino-acid chain; its full sequence is Trigger factor (449 aa).

One can recognise a PPIase FKBP-type domain in the interval 173 to 258; the sequence is GDRVTVDFVG…LKKVEWPHLP (86 aa).

Belongs to the FKBP-type PPIase family. Tig subfamily.

Its subcellular location is the cytoplasm. The enzyme catalyses [protein]-peptidylproline (omega=180) = [protein]-peptidylproline (omega=0). In terms of biological role, involved in protein export. Acts as a chaperone by maintaining the newly synthesized protein in an open conformation. Functions as a peptidyl-prolyl cis-trans isomerase. This Burkholderia mallei (strain NCTC 10229) protein is Trigger factor.